Consider the following 725-residue polypeptide: Homeobox-leucine zipper protein HDG3 (725 aa).

A disordered region spans residues 1-74 (MSQSNMVPVA…PRHKKKKYNR (74 aa)). The span at 11 to 40 (NNGDNNNDNENNNNNNNNGGTDNTNAGNDS) shows a compositional bias: low complexity. Residues 46-64 (DSGNTSSGNHGEGLGNNQA) show a composition bias toward polar residues. The segment covering 65 to 74 (PRHKKKKYNR) has biased composition (basic residues). Residues 68–127 (KKKKYNRHTQLQISEMEAFFRECPHPDDKQRYDLSAQLGLDPVQIKFWFQNKRTQNKNQQ) constitute a DNA-binding region (homeobox). Positions 117–201 (QNKRTQNKNQ…SVTAEKISRL (85 aa)) form a coiled coil. Residues 243-475 (DANTKPIIME…LVRQCERISS (233 aa)) form the START domain.

Belongs to the HD-ZIP homeobox family. Class IV subfamily. In terms of assembly, interacts with AIL7/PLT7, ANT, BBM and AIL1. Expressed in siliques.

The protein resides in the nucleus. In terms of biological role, probable transcription factor. Seems to promote cell differentiation. The chain is Homeobox-leucine zipper protein HDG3 from Arabidopsis thaliana (Mouse-ear cress).